We begin with the raw amino-acid sequence, 257 residues long: 5-keto-4-deoxy-D-glucarate aldolase (257 aa).

His-51 acts as the Proton acceptor in catalysis. Gln-152 provides a ligand contact to substrate. Residue Glu-154 coordinates Mg(2+). Substrate contacts are provided by Ser-179 and Asp-180. Asp-180 contacts Mg(2+).

The protein belongs to the HpcH/HpaI aldolase family. KDGluc aldolase subfamily. Homohexamer; trimer of dimers. Mg(2+) serves as cofactor.

The enzyme catalyses 5-dehydro-4-deoxy-D-glucarate = 2-hydroxy-3-oxopropanoate + pyruvate. It catalyses the reaction 2-dehydro-3-deoxy-D-glucarate = 2-hydroxy-3-oxopropanoate + pyruvate. It participates in carbohydrate acid metabolism; galactarate degradation; D-glycerate from galactarate: step 2/3. Catalyzes the reversible retro-aldol cleavage of both 5-keto-4-deoxy-D-glucarate and 2-keto-3-deoxy-D-glucarate to pyruvate and tartronic semialdehyde. The polypeptide is 5-keto-4-deoxy-D-glucarate aldolase (Shigella boydii serotype 18 (strain CDC 3083-94 / BS512)).